Reading from the N-terminus, the 312-residue chain is Mas-related G-protein coupled receptor member B3 (312 aa).

Topologically, residues 1 to 31 (MALRTSLITTTAPDKTSLPISICIIKFQVMN) are extracellular. Residues 32–52 (LLSITISPVGMVLNIIVLWFL) traverse the membrane as a helical segment. Over 53–67 (GFQICRNAFSAYILN) the chain is Cytoplasmic. The helical transmembrane segment at 68–88 (LAVADFLFLCSHSIFSFLIVC) threads the bilayer. The Extracellular portion of the chain corresponds to 89–106 (KLHYFLFYIRQLLDTVTM). Residues 107–127 (FAYVFGLSITTIISIECCLSI) traverse the membrane as a helical segment. The Cytoplasmic segment spans residues 128–140 (MWPIWYHCQRPRH). The chain crosses the membrane as a helical span at residues 141–161 (TSAVICVLLWALSLLFPALQM). Residues 162–180 (EKCSVLFNTFEYSWCGIIN) lie on the Extracellular side of the membrane. A helical transmembrane segment spans residues 181–201 (IISGAWLVVLFVVLCGFSLIL). Topologically, residues 202–220 (LLRISCGSQQIPVTRLNVT) are cytoplasmic. The chain crosses the membrane as a helical span at residues 221–241 (IALRVLLLLIFGIPFGIFWIV). The Extracellular segment spans residues 242–259 (DKWNEENFFVRACGFSHH). A helical transmembrane segment spans residues 260–280 (ILYVYCINICVNATIYFLVGS). The Cytoplasmic portion of the chain corresponds to 281-312 (IRHGKFQKMTLKLILQRAIQGTPEEEGGERGP).

The protein belongs to the G-protein coupled receptor 1 family. Mas subfamily.

It is found in the membrane. In terms of biological role, orphan receptor. Probably involved in the function of nociceptive neurons. May regulate nociceptor function and/or development, including the sensation or modulation of pain. This chain is Mas-related G-protein coupled receptor member B3 (Mrgprb3), found in Mus musculus (Mouse).